The sequence spans 1479 residues: Chromosome partition protein MukB (1479 aa).

34-41 (GGNGAGKS) provides a ligand contact to ATP. 5 coiled-coil regions span residues 337–418 (LNLV…QYQQ), 511–603 (QAER…RAPV), 780–810 (RAAREMRLESLRDEREALAEQYATLSFDVQK), 847–1116 (ELDR…AKAG), and 1206–1265 (DDPV…LQAV). A flexible hinge region spans residues 666 to 783 (PGGSEDPRLN…EVPLFGRAAR (118 aa)).

Belongs to the SMC family. MukB subfamily. Homodimerization via its hinge domain. Binds to DNA via its C-terminal region. Interacts, and probably forms a ternary complex, with MukE and MukF via its C-terminal region. The complex formation is stimulated by calcium or magnesium. Interacts with tubulin-related protein FtsZ.

The protein localises to the cytoplasm. It is found in the nucleoid. In terms of biological role, plays a central role in chromosome condensation, segregation and cell cycle progression. Functions as a homodimer, which is essential for chromosome partition. Involved in negative DNA supercoiling in vivo, and by this means organize and compact chromosomes. May achieve or facilitate chromosome segregation by condensation DNA from both sides of a centrally located replisome during cell division. The polypeptide is Chromosome partition protein MukB (Pectobacterium carotovorum subsp. carotovorum (strain PC1)).